The following is a 290-amino-acid chain: ATP synthase gamma chain (290 aa).

It belongs to the ATPase gamma chain family. F-type ATPases have 2 components, CF(1) - the catalytic core - and CF(0) - the membrane proton channel. CF(1) has five subunits: alpha(3), beta(3), gamma(1), delta(1), epsilon(1). CF(0) has four main subunits: a, b, b' and c.

It is found in the cellular chromatophore membrane. In terms of biological role, produces ATP from ADP in the presence of a proton gradient across the membrane. The gamma chain is believed to be important in regulating ATPase activity and the flow of protons through the CF(0) complex. This chain is ATP synthase gamma chain, found in Rhodobacter capsulatus (Rhodopseudomonas capsulata).